The chain runs to 185 residues: NADH-quinone oxidoreductase subunit B (185 aa).

4 residues coordinate [4Fe-4S] cluster: C37, C38, C103, and C132.

Belongs to the complex I 20 kDa subunit family. As to quaternary structure, NDH-1 is composed of 14 different subunits. Subunits NuoB, C, D, E, F, and G constitute the peripheral sector of the complex. The cofactor is [4Fe-4S] cluster.

The protein localises to the cell membrane. It catalyses the reaction a quinone + NADH + 5 H(+)(in) = a quinol + NAD(+) + 4 H(+)(out). In terms of biological role, NDH-1 shuttles electrons from NADH, via FMN and iron-sulfur (Fe-S) centers, to quinones in the respiratory chain. The immediate electron acceptor for the enzyme in this species is believed to be a menaquinone. Couples the redox reaction to proton translocation (for every two electrons transferred, four hydrogen ions are translocated across the cytoplasmic membrane), and thus conserves the redox energy in a proton gradient. The sequence is that of NADH-quinone oxidoreductase subunit B from Thermobifida fusca (strain YX).